The chain runs to 119 residues: Large ribosomal subunit protein bL20 (119 aa).

This sequence belongs to the bacterial ribosomal protein bL20 family.

In terms of biological role, binds directly to 23S ribosomal RNA and is necessary for the in vitro assembly process of the 50S ribosomal subunit. It is not involved in the protein synthesizing functions of that subunit. This is Large ribosomal subunit protein bL20 from Rhodopseudomonas palustris (strain BisA53).